The primary structure comprises 113 residues: Large ribosomal subunit protein uL22 (113 aa).

Belongs to the universal ribosomal protein uL22 family. Part of the 50S ribosomal subunit.

Its function is as follows. This protein binds specifically to 23S rRNA; its binding is stimulated by other ribosomal proteins, e.g. L4, L17, and L20. It is important during the early stages of 50S assembly. It makes multiple contacts with different domains of the 23S rRNA in the assembled 50S subunit and ribosome. In terms of biological role, the globular domain of the protein is located near the polypeptide exit tunnel on the outside of the subunit, while an extended beta-hairpin is found that lines the wall of the exit tunnel in the center of the 70S ribosome. The protein is Large ribosomal subunit protein uL22 of Xanthomonas axonopodis pv. citri (strain 306).